We begin with the raw amino-acid sequence, 122 residues long: Large ribosomal subunit protein uL14 (122 aa).

Belongs to the universal ribosomal protein uL14 family. As to quaternary structure, part of the 50S ribosomal subunit. Forms a cluster with proteins L3 and L19. In the 70S ribosome, L14 and L19 interact and together make contacts with the 16S rRNA in bridges B5 and B8.

Functionally, binds to 23S rRNA. Forms part of two intersubunit bridges in the 70S ribosome. This chain is Large ribosomal subunit protein uL14, found in Coxiella burnetii (strain RSA 331 / Henzerling II).